We begin with the raw amino-acid sequence, 358 residues long: Tubulin-like protein TubZ (358 aa).

GDP is bound by residues 12–16 (QGGGN), Thr95, 99–101 (GTG), Glu132, Asn164, Glu170, and Asn174. Residue Asn182 participates in GTP binding.

It belongs to the FtsZ family. TubZ subfamily. In terms of assembly, monomer. In the presence of Mg(2+) and GTP assembles into 2-stranded filaments which coalesce into bundles. Binds a centromere-like site (tubC)-TubR complex. The TubZ-TubR-tubC complex bind to TubY which reshapes the filament bundles into rings. A later paper by the same group shows 4-stranded filament formation and suggests the 2-stranded form is a short-lived intermediate.

The protein localises to the host cytoplasm. The catalysed reaction is GTP + H2O = GDP + phosphate + H(+). Its function is as follows. A tubulin-like, filament forming GTPase; the motor component of the type III partition system presumably used to ensure correct segregation of this bacteriophage. In the presence of Mg(2+) and GTP (or GTP-gamma-S) assembles into filaments which upon polymerization are almost exclusively bound to GDP. Filament formation is cooperative, requiring a critical concentration. Formation occurs very quickly and is followed by disassembly as GTP is consumed. Unlike its plasmid homolog in B.thuringiensis (AC Q8KNP3) GTP-gamma-S does not alter filament formation. When forced to assemble with GDP instead of GTP it makes much stiffer, thicker filaments. The filaments bind a DNA centromere-like site (tubC)-TubR complex which extends to surround the TubZ filaments. Highly dynamic filaments grow at the plus end and depolymerize at the minus end, a process called treadmilling. TubR-tubC complexes track the depolymerizing minus end of the filament, probably pulling phage DNA within the cell. The protein is Tubulin-like protein TubZ of Clostridium botulinum C phage (Clostridium botulinum C bacteriophage).